We begin with the raw amino-acid sequence, 156 residues long: 3-hydroxyacyl-[acyl-carrier-protein] dehydratase FabZ (156 aa).

H57 is an active-site residue.

The protein belongs to the thioester dehydratase family. FabZ subfamily.

It is found in the cytoplasm. It catalyses the reaction a (3R)-hydroxyacyl-[ACP] = a (2E)-enoyl-[ACP] + H2O. In terms of biological role, involved in unsaturated fatty acids biosynthesis. Catalyzes the dehydration of short chain beta-hydroxyacyl-ACPs and long chain saturated and unsaturated beta-hydroxyacyl-ACPs. The polypeptide is 3-hydroxyacyl-[acyl-carrier-protein] dehydratase FabZ (Anaeromyxobacter sp. (strain K)).